The primary structure comprises 125 residues: Phosphoribosyl-AMP cyclohydrolase (125 aa).

D74 is a Mg(2+) binding site. C75 contributes to the Zn(2+) binding site. Positions 76 and 78 each coordinate Mg(2+). Zn(2+)-binding residues include C92 and C99.

The protein belongs to the PRA-CH family. Homodimer. Mg(2+) serves as cofactor. It depends on Zn(2+) as a cofactor.

The protein localises to the cytoplasm. It carries out the reaction 1-(5-phospho-beta-D-ribosyl)-5'-AMP + H2O = 1-(5-phospho-beta-D-ribosyl)-5-[(5-phospho-beta-D-ribosylamino)methylideneamino]imidazole-4-carboxamide. The protein operates within amino-acid biosynthesis; L-histidine biosynthesis; L-histidine from 5-phospho-alpha-D-ribose 1-diphosphate: step 3/9. Catalyzes the hydrolysis of the adenine ring of phosphoribosyl-AMP. This is Phosphoribosyl-AMP cyclohydrolase from Citrifermentans bemidjiense (strain ATCC BAA-1014 / DSM 16622 / JCM 12645 / Bem) (Geobacter bemidjiensis).